A 443-amino-acid chain; its full sequence is ATP-dependent protease ATPase subunit HslU (443 aa).

ATP contacts are provided by residues isoleucine 18, 60 to 65, aspartate 256, glutamate 321, and arginine 393; that span reads GVGKTE.

This sequence belongs to the ClpX chaperone family. HslU subfamily. In terms of assembly, a double ring-shaped homohexamer of HslV is capped on each side by a ring-shaped HslU homohexamer. The assembly of the HslU/HslV complex is dependent on binding of ATP.

The protein localises to the cytoplasm. Functionally, ATPase subunit of a proteasome-like degradation complex; this subunit has chaperone activity. The binding of ATP and its subsequent hydrolysis by HslU are essential for unfolding of protein substrates subsequently hydrolyzed by HslV. HslU recognizes the N-terminal part of its protein substrates and unfolds these before they are guided to HslV for hydrolysis. The sequence is that of ATP-dependent protease ATPase subunit HslU from Citrobacter koseri (strain ATCC BAA-895 / CDC 4225-83 / SGSC4696).